Consider the following 342-residue polypeptide: MKVEDFDFDLPEELIAQTPLLDRTSSRLMVLDKESGDIKDQHFTDIISYLNEGDALVLNDTRVLPARLHGIKDETGAHIEVLLLKQKEGNAWETLVKPAKRIRKGATITFGDGALKATCLEELEHGGRILEFSYEGIFYEVLEQLGEMPLPPYIKEQLADQDRYQTVYAKENGSAAAPTAGLHFTEDLLEQISAKGVEIIFVTLHVGLGTFRPVDVEDTTNHKMHSEFYRLTEESAERINKIKAQGGKVVAVGTTSIRTLETIASRHDGKLVAESGWTEIFISPGYTFQAVDALITNFHLPKSTLIMLVSALSDRTKILAAYNHAVEEQYRFFSFGDAMFIH.

This sequence belongs to the QueA family. As to quaternary structure, monomer.

The protein localises to the cytoplasm. The enzyme catalyses 7-aminomethyl-7-carbaguanosine(34) in tRNA + S-adenosyl-L-methionine = epoxyqueuosine(34) in tRNA + adenine + L-methionine + 2 H(+). It participates in tRNA modification; tRNA-queuosine biosynthesis. Functionally, transfers and isomerizes the ribose moiety from AdoMet to the 7-aminomethyl group of 7-deazaguanine (preQ1-tRNA) to give epoxyqueuosine (oQ-tRNA). The polypeptide is S-adenosylmethionine:tRNA ribosyltransferase-isomerase (Listeria monocytogenes serovar 1/2a (strain ATCC BAA-679 / EGD-e)).